The primary structure comprises 461 residues: Lysosomal proton-coupled steroid conjugate and bile acid symporter SLC46A3 (461 aa).

Residues 1 to 25 (MKIPFVEPVICLSVFAVTLNSPLTT) form the signal peptide. Residues 26–70 (QYVYRRIWEETGNYSIALESNTSECAKNKSSPIFAFQEEVQKKVS) are Extracellular-facing. 3 N-linked (GlcNAc...) asparagine glycosylation sites follow: Asn-38, Asn-46, and Asn-53. Residues 71 to 91 (LFNLEMDISGLIPGLVSTFVF) traverse the membrane as a helical segment. The Cytoplasmic segment spans residues 92 to 101 (LSHSDHGGRK). A helical transmembrane segment spans residues 102 to 124 (FPLILSSVGALANSAWLCLLSYF). Topologically, residues 125-133 (ALPIQLLIA) are extracellular. A helical transmembrane segment spans residues 134-156 (STFIGALFGNYTTFLGASFAYIV). Residues 157 to 170 (DQCKEKKQRTIRIA) lie on the Cytoplasmic side of the membrane. The helical transmembrane segment at 171 to 191 (IIDFLFGVVSGLTGLSSGYFI) threads the bilayer. Residues 192-195 (RGLG) are Extracellular-facing. The helical transmembrane segment at 196 to 216 (FVWSFLIVTVALFVNLIYILL) threads the bilayer. Residues 217 to 261 (FLEDSMKESSSQNISVSWTETFKNLFHRTYMLFKNASGEQQSLCC) are Cytoplasmic-facing. A helical transmembrane segment spans residues 262–282 (LLLFTMITYFFVTIGVSPIFV). Topologically, residues 283-294 (LYELDSPLCWDE) are extracellular. The helical transmembrane segment at 295–315 (VLIGYGSALGSVTFFSSFLGI) threads the bilayer. Residues 316-324 (WLFSYCMED) are Cytoplasmic-facing. The chain crosses the membrane as a helical span at residues 325 to 345 (IHMAFIGTFTTMVGMAMTAFA). At 346–347 (RT) the chain is on the extracellular side. A helical membrane pass occupies residues 348–368 (TLMMFLVRLPFLFTVMPLSVL). At 369–382 (RSMISKVVHSTEQG) the chain is on the cytoplasmic side. Residues 383-403 (TMFACLAFLETLGGITAVSTF) form a helical membrane-spanning segment. Residues 404 to 415 (NGIYSATVAWCK) lie on the Extracellular side of the membrane. A helical transmembrane segment spans residues 416–436 (GFVFLLSAVLLLIPAISLCVI). The Cytoplasmic portion of the chain corresponds to 437-461 (KYVSRNTGSYVLLIQEESSEDTSDR). The Tyrosine-based lysosomal-sorting motif signature appears at 446–449 (YVLL).

The protein belongs to the major facilitator superfamily. SLC46A family.

The protein resides in the lysosome membrane. It catalyses the reaction estrone 3-sulfate(out) + n H(+)(out) = estrone 3-sulfate(in) + n H(+)(in). The catalysed reaction is 25-hydroxyvitamin D3 sulfate(out) + n H(+)(out) = 25-hydroxyvitamin D3 sulfate(in) + n H(+)(in). It carries out the reaction cholate(out) + n H(+)(out) = cholate(in) + n H(+)(in). The enzyme catalyses glycocholate(out) + n H(+)(out) = glycocholate(in) + n H(+)(in). It catalyses the reaction taurocholate(out) + n H(+)(out) = taurocholate(in) + n H(+)(in). The catalysed reaction is dehydroepiandrosterone 3-sulfate(out) + n H(+)(out) = dehydroepiandrosterone 3-sulfate(in) + n H(+)(in). It carries out the reaction N-acetyl-D-muramoyl-L-alanyl-D-isoglutamine(out) + n H(+)(out) = N-acetyl-D-muramoyl-L-alanyl-D-isoglutamine(in) + n H(+)(in). The enzyme catalyses 2',3'-cGAMP(out) + n H(+)(out) = 2',3'-cGAMP(in) + n H(+)(in). In terms of biological role, lysosomal proton-coupled steroid conjugate and bile acid transporter. Preferentially recognizes lipophilic steroid conjugates or bile acis as endogenous substrates and seems to mediate escape from lysosomes to the cytoplasm. Modulates hepatic cytosolic copper homeostasis, maybe acting as a lysosomal copper transporter and sequestering copper ions in the lysosome. Delivers pathogen-associated molecular patterns to cytosolic pattern recognition receptors as part of the innate immune response to microbes. Selectively transports bacterial muramyl dipeptide (MDP) into the cytosol for recognition by NOD2, triggering inflammatory responses. Likely acts as a redundant importer of cyclic GMP-AMP dinucleotides (cGAMPs) in monocyte and macrophage cell lineages. The transport mechanism, its electrogenicity and stoichiometry remain to be elucidated. This is Lysosomal proton-coupled steroid conjugate and bile acid symporter SLC46A3 (SLC46A3) from Bos taurus (Bovine).